Reading from the N-terminus, the 237-residue chain is Putative N-acetylmannosamine-6-phosphate 2-epimerase (237 aa).

The protein belongs to the NanE family.

It catalyses the reaction an N-acyl-D-glucosamine 6-phosphate = an N-acyl-D-mannosamine 6-phosphate. It functions in the pathway amino-sugar metabolism; N-acetylneuraminate degradation; D-fructose 6-phosphate from N-acetylneuraminate: step 3/5. Functionally, converts N-acetylmannosamine-6-phosphate (ManNAc-6-P) to N-acetylglucosamine-6-phosphate (GlcNAc-6-P). This chain is Putative N-acetylmannosamine-6-phosphate 2-epimerase, found in Listeria monocytogenes serovar 1/2a (strain ATCC BAA-679 / EGD-e).